A 372-amino-acid polypeptide reads, in one-letter code: sn-glycerol-3-phosphate import ATP-binding protein UgpC (372 aa).

The ABC transporter domain occupies 2–233 (LDIKQLVKTY…PASTFVASFI (232 aa)). Residue 35–42 (GPSGCGKS) participates in ATP binding.

Belongs to the ABC transporter superfamily. sn-glycerol-3-phosphate importer (TC 3.A.1.1.3) family. As to quaternary structure, the complex is composed of two ATP-binding proteins (UgpC), two transmembrane proteins (UgpA and UgpE) and a solute-binding protein (UgpB).

It localises to the cell inner membrane. It catalyses the reaction sn-glycerol 3-phosphate(out) + ATP + H2O = sn-glycerol 3-phosphate(in) + ADP + phosphate + H(+). Part of the ABC transporter complex UgpBAEC involved in sn-glycerol-3-phosphate (G3P) import. Responsible for energy coupling to the transport system. The chain is sn-glycerol-3-phosphate import ATP-binding protein UgpC from Vibrio cholerae serotype O1 (strain ATCC 39315 / El Tor Inaba N16961).